A 1111-amino-acid chain; its full sequence is Histone deacetylase 5 (1111 aa).

A Glycyl lysine isopeptide (Lys-Gly) (interchain with G-Cter in SUMO2) cross-link involves residue K35. Disordered stretches follow at residues 40–63, 107–136, and 187–272; these read GAMPSSMGGGGGGSPSPVELRGAL, RQHEVQLQKHLKQQQEMLAAKRQQELEQQR, and KEPT…SSPL. Positions 238–249 are enriched in basic and acidic residues; the sequence is DSRDDFPLRKTA. Position 250 is a phosphoserine; by AMPK, CaMK1, SIK1 and PKD/PRKD1 (S250). The segment covering 263 to 272 has biased composition (basic and acidic residues); the sequence is KVAERRSSPL. Phosphothreonine; by PKC is present on T283. Residues 474 to 495 are disordered; sequence TVGKLPRHRPLSRTQSSPLPQS. Residues 485–495 show a composition bias toward low complexity; the sequence is SRTQSSPLPQS. S489 is modified (phosphoserine; by AMPK, CaMK1, SIK1 and PKD/PRKD1). N6-acetyllysine is present on K524. 2 disordered regions span residues 527–611 and 645–666; these read TKTG…LEES and LGRTQSSPAAPGSMKSPPDQPT. A compositionally biased stretch (acidic residues) spans 572 to 610; the sequence is STQEDLEEEEDEEEEDEDCIQVKDEEGESGPDEGPDLEE. S600 and S650 each carry phosphoserine. Positions 671–1017 are histone deacetylase; the sequence is TTGVVYDTFM…VSALLSVELQ (347 aa). The Zn(2+) site is built by C685, C687, H693, and C770. H822 is an active-site residue. The Nuclear export signal motif lies at 1070–1109; the sequence is EEAETVSAMALLSVGAEQAQAVATQEHSPRPAEEPMEQEP. A disordered region spans residues 1086 to 1111; the sequence is EQAQAVATQEHSPRPAEEPMEQEPTL. S1097 is subject to Phosphoserine.

It belongs to the histone deacetylase family. HD type 2 subfamily. In terms of assembly, interacts with AHRR, BAHD1, BCOR, HDAC7, HDAC9, CTBP1, MEF2C, NCOR2, NRIP1, PHB2 and a 14-3-3 chaperone protein. Interacts with BCL6, DDIT3/CHOP, GRK5, KDM5B and MYOCD. Interacts with EP300 in the presence of TFAP2C. Interacts with ANKRA2. Interacts with CUL7 (as part of the 3M complex); negatively regulated by ANKRA2. Interacts with ZBTB7B; the interaction allows the recruitment of HDAC4 on CD8 loci for deacetylation and possible inhibition of CD8 genes expression. Interacts with RARA. In terms of processing, phosphorylated by AMPK, CaMK1, SIK1 and PRKD1 at Ser-250 and Ser-489. The phosphorylation is required for the export to the cytoplasm and inhibition. Phosphorylated by the PKC kinases PKN1 and PKN2, impairing nuclear import. Phosphorylated by GRK5, leading to nuclear export of HDAC5 and allowing MEF2-mediated transcription. Ubiquitinated. Polyubiquitination however does not lead to its degradation.

It localises to the nucleus. Its subcellular location is the cytoplasm. It carries out the reaction N(6)-acetyl-L-lysyl-[histone] + H2O = L-lysyl-[histone] + acetate. Responsible for the deacetylation of lysine residues on the N-terminal part of the core histones (H2A, H2B, H3 and H4). Histone deacetylation gives a tag for epigenetic repression and plays an important role in transcriptional regulation, cell cycle progression and developmental events. Histone deacetylases act via the formation of large multiprotein complexes. Involved in muscle maturation by repressing transcription of myocyte enhancer MEF2C. During muscle differentiation, it shuttles into the cytoplasm, allowing the expression of myocyte enhancer factors. Serves as a corepressor of RARA and causes its deacetylation. In association with RARA, plays a role in the repression of microRNA-10a and thereby in the inflammatory response. In Cricetulus griseus (Chinese hamster), this protein is Histone deacetylase 5 (HDAC5).